Consider the following 173-residue polypeptide: Protein GrpE (173 aa).

The segment covering 1–20 has biased composition (basic and acidic residues); it reads MQDEFKTDTPRTEAGSEKET. Residues 1–23 are disordered; the sequence is MQDEFKTDTPRTEAGSEKETMPS.

This sequence belongs to the GrpE family. In terms of assembly, homodimer.

The protein resides in the cytoplasm. In terms of biological role, participates actively in the response to hyperosmotic and heat shock by preventing the aggregation of stress-denatured proteins, in association with DnaK and GrpE. It is the nucleotide exchange factor for DnaK and may function as a thermosensor. Unfolded proteins bind initially to DnaJ; upon interaction with the DnaJ-bound protein, DnaK hydrolyzes its bound ATP, resulting in the formation of a stable complex. GrpE releases ADP from DnaK; ATP binding to DnaK triggers the release of the substrate protein, thus completing the reaction cycle. Several rounds of ATP-dependent interactions between DnaJ, DnaK and GrpE are required for fully efficient folding. The protein is Protein GrpE of Thiobacillus denitrificans (strain ATCC 25259 / T1).